We begin with the raw amino-acid sequence, 820 residues long: MLFRWCPLVALAIASGTAATEQSWESSPYYPSPWTKGEGEWEAAYQKAVSFVSQLTLDEKVNLTTGVGWMQESCVGQVGSIPRLGFRSLCMQDGPLGIRFGTEARMDIFLYLTCNTNFYLPYVGDYVTAFPAGINVAATWSRELAYLRGKAMGEEFRGKGADVILGPAIGPIGRAPEGGRNWEGLGPDPVLAGKLVAETIKGMQKSGVIACAKHFIANEQERFRIAAEAQGYGFDIAESISSNVDDVTMHEIYLWPFADAVKAGVGSIMCSYNQINNSYGCGNSYTQNKLLKGELGFRGFIMSDWQAHHSGVGSAFAGLDMSMPGDTLFGTGVSYWGANLTIAVANGTIPEWRVDDMAVRIMAAYYKVGRDQVQVPINFNSWTTDVEGYQHALVKEGYGVVNQRVNVRDHHAQIARRVARDSTVLLKNKGVLPLTGTEQFTAIIGEDAGPNINGPNSCPDRGCDNGTLAMGWGSGTTNFPYLVTPDDAIQREIVGKGVGNVMSVLQNGDFKNIQAVAGQADVALVFINSDSGEGYISVDGNEGDRKNLTTWKGGDEMVKQVTSVCNNTVLVIHSSGPILAGQWHDNPNITAILWAGLPGQESGNALVDILYGKENPGGKSPFTWGRAAEDYGTTILREPNNGKGAPQHLFSEGIMFEYRHFDQKNITPVYEFGYGLSYTTFSYSDLRVRPMRANKYVPATGMTKPAPRLGHSSTKYADYLFPGGFKGVTKYVYPWLTSTDPKEASGDKNYGMPLEDYVPPNANNGDAQPVLPASGVPGGNPGLFEDLYEVSAVITNDGDRVGEEVPQLVRNLSFFPPILS.

Positions M1–A18 are cleaved as a signal peptide. N-linked (GlcNAc...) asparagine glycosylation is found at N62 and N276. Residue D304 is part of the active site. N-linked (GlcNAc...) asparagine glycosylation is found at N339, N346, N465, N547, N566, N588, and N811.

Belongs to the glycosyl hydrolase 3 family.

The protein resides in the secreted. The catalysed reaction is Hydrolysis of terminal, non-reducing beta-D-glucosyl residues with release of beta-D-glucose.. It participates in glycan metabolism; cellulose degradation. Beta-glucosidases are one of a number of cellulolytic enzymes involved in the degradation of cellulosic biomass. Catalyzes the last step releasing glucose from the inhibitory cellobiose. In Arthroderma benhamiae (strain ATCC MYA-4681 / CBS 112371) (Trichophyton mentagrophytes), this protein is Probable beta-glucosidase ARB_05654.